The sequence spans 110 residues: Phosphoribosyl-ATP pyrophosphatase (110 aa).

The protein belongs to the PRA-PH family.

The protein resides in the cytoplasm. It carries out the reaction 1-(5-phospho-beta-D-ribosyl)-ATP + H2O = 1-(5-phospho-beta-D-ribosyl)-5'-AMP + diphosphate + H(+). The protein operates within amino-acid biosynthesis; L-histidine biosynthesis; L-histidine from 5-phospho-alpha-D-ribose 1-diphosphate: step 2/9. The protein is Phosphoribosyl-ATP pyrophosphatase of Pseudomonas fluorescens (strain SBW25).